A 104-amino-acid polypeptide reads, in one-letter code: Large ribosomal subunit protein eL42 (104 aa).

The tract at residues 22-56 (KVSQAKKSKDNPRAQGNRRYARKQRGYGGQTKPIL) is disordered.

It belongs to the eukaryotic ribosomal protein eL42 family.

The chain is Large ribosomal subunit protein eL42 (RPL44) from Encephalitozoon cuniculi (strain GB-M1) (Microsporidian parasite).